A 470-amino-acid chain; its full sequence is Glutathione reductase (470 aa).

Ser16 and Gly17 together coordinate FAD. Ser16 lines the glutathione pocket. Arg23 is a binding site for glutathione. 4 residues coordinate FAD: Glu36, Thr43, Cys44, and Lys52. A disulfide bridge connects residues Cys44 and Cys49. Tyr104 contacts glutathione. Residue Ala120 participates in FAD binding. NADP(+) contacts are provided by Gly190, Ile193, Glu196, Arg213, and Arg219. Glutathione is bound at residue Thr228. Gly280 provides a ligand contact to NADP(+). Asp321 provides a ligand contact to FAD. NADP(+) is bound at residue Glu327. An FAD-binding site is contributed by Thr329. Arg337 provides a ligand contact to glutathione. NADP(+) is bound at residue Ala362. Lys412 contacts glutathione. FAD is bound at residue His459. The active-site Proton acceptor is His459.

This sequence belongs to the class-I pyridine nucleotide-disulfide oxidoreductase family. As to quaternary structure, homodimer. It depends on FAD as a cofactor.

It is found in the cytoplasm. It localises to the mitochondrion. The enzyme catalyses 2 glutathione + NADP(+) = glutathione disulfide + NADPH + H(+). Functionally, catalyzes the reduction of glutathione disulfide (GSSG) to reduced glutathione (GSH). Constitutes the major mechanism to maintain a high GSH:GSSG ratio in the cytosol. The sequence is that of Glutathione reductase (GLR1) from Yarrowia lipolytica (strain CLIB 122 / E 150) (Yeast).